We begin with the raw amino-acid sequence, 60 residues long: Metallothionein B (60 aa).

A beta region spans residues 1–28 (MDPCECTKSGTCNCGGSCTCTNCSCTSC). Residues cysteine 4, cysteine 6, cysteine 12, cysteine 14, cysteine 18, cysteine 20, cysteine 23, cysteine 25, cysteine 28, cysteine 32, cysteine 33, cysteine 35, cysteine 36, cysteine 40, cysteine 43, cysteine 47, cysteine 49, cysteine 54, cysteine 58, and cysteine 59 each coordinate a divalent metal cation. Residues 29–60 (KKSCCPCCPSGCTKCASGCVCKGKTCDTSCCQ) are alpha.

The protein belongs to the metallothionein superfamily. Type 1 family.

Functionally, metallothioneins have a high content of cysteine residues that bind various heavy metals. The sequence is that of Metallothionein B (mtb) from Chaenocephalus aceratus (Blackfin icefish).